The sequence spans 417 residues: F-box protein At3g07870 (417 aa).

Positions 22 to 68 (GGGLESLPEDIIADIFSRLPISSIARLMFVCRSWRSVLTQHGRLSSS) constitute an F-box domain.

This Arabidopsis thaliana (Mouse-ear cress) protein is F-box protein At3g07870.